Here is a 214-residue protein sequence, read N- to C-terminus: Refilin-B (214 aa).

A disordered region spans residues 1-56 (MVGRLSLQDVPELVDAKKKGDGVLDSPDSGLPPSPSPSHWGLAAGGGGGERAAAPG). S6 and S26 each carry phosphoserine.

It belongs to the Refilin family. Interacts with FLNA and FLNB.

Its subcellular location is the cytoplasm. It localises to the cytoskeleton. In terms of biological role, involved in the regulation of the perinuclear actin network and nuclear shape through interaction with filamins. Plays an essential role in the formation of cartilaginous skeletal elements. The chain is Refilin-B from Homo sapiens (Human).